The primary structure comprises 141 residues: Protein NrdI (141 aa).

The protein belongs to the NrdI family.

Probably involved in ribonucleotide reductase function. This is Protein NrdI from Wigglesworthia glossinidia brevipalpis.